The following is a 122-amino-acid chain: Large ribosomal subunit protein uL18 (122 aa).

The segment covering 1–20 (MLKKVSKNTNRQGRHQRVRN) has biased composition (basic residues). The interval 1-22 (MLKKVSKNTNRQGRHQRVRNKI) is disordered.

The protein belongs to the universal ribosomal protein uL18 family. As to quaternary structure, part of the 50S ribosomal subunit; part of the 5S rRNA/L5/L18/L25 subcomplex. Contacts the 5S and 23S rRNAs.

In terms of biological role, this is one of the proteins that bind and probably mediate the attachment of the 5S RNA into the large ribosomal subunit, where it forms part of the central protuberance. In Alkaliphilus metalliredigens (strain QYMF), this protein is Large ribosomal subunit protein uL18.